A 221-amino-acid polypeptide reads, in one-letter code: Capsid protein (221 aa).

The interval methionine 1 to alanine 24 is disordered. The residue at position 2 (serine 2) is an N-acetylserine; by host.

This sequence belongs to the alphamovirus/ilarvirus capsid protein family.

The protein resides in the virion. In terms of biological role, capsid protein. Binds to the to the 3' end of the nonpolyadenylated viral RNA and is involved in viral RNA translation initiation. Probably binds RNA and plays a role in packaging. This chain is Capsid protein, found in Alfalfa mosaic virus (strain YSMV).